Here is a 177-residue protein sequence, read N- to C-terminus: Large ribosomal subunit protein uL10 (177 aa).

The protein belongs to the universal ribosomal protein uL10 family. In terms of assembly, part of the ribosomal stalk of the 50S ribosomal subunit. The N-terminus interacts with L11 and the large rRNA to form the base of the stalk. The C-terminus forms an elongated spine to which L12 dimers bind in a sequential fashion forming a multimeric L10(L12)X complex.

In terms of biological role, forms part of the ribosomal stalk, playing a central role in the interaction of the ribosome with GTP-bound translation factors. This Leptospira biflexa serovar Patoc (strain Patoc 1 / Ames) protein is Large ribosomal subunit protein uL10.